A 528-amino-acid chain; its full sequence is Transcription factor cghF (528 aa).

Residues 232-283 (TPPNHATSSTPTSTRTPPTYHPHGPRPKSPLSSTPSPRTESTKSAAPSRDLA) form a disordered region. A compositionally biased stretch (low complexity) spans 238–249 (TSSTPTSTRTPP). Positions 261-276 (PLSSTPSPRTESTKSA) are enriched in polar residues.

Its subcellular location is the nucleus. Functionally, transcription factor that regulates the expression of the gene cluster that mediates the biosynthesis of the tetramic acid Sch210972, a potential anti-HIV fungal natural product that contains a decalin core. This chain is Transcription factor cghF, found in Chaetomium globosum (strain ATCC 6205 / CBS 148.51 / DSM 1962 / NBRC 6347 / NRRL 1970) (Soil fungus).